Consider the following 382-residue polypeptide: uncharacterized protein (382 aa).

Helical transmembrane passes span 14-34 (GLLLLTLAIAVLNTLVPLWLA), 45-65 (VVSSSYFTGNLVGTLLTGYVI), 79-99 (FIFAAGCAGLGLMIGFWSWLA), 102-122 (FVAGIGCAMIWVVVESALMCS), 131-151 (LLAAYMMVYYVGTFLGQLLVS), 157-177 (LMSVLPWVTGLTLAGILPLLF), 204-224 (LGVNGCIISGIVLGSLYGLMP), 235-255 (ASIGFWMAVLVSAGILGQWPI), 270-290 (VQVFVVILGSIAMLSQAAMAP), 291-311 (ALFILGAAGFTLYPVAMAWAC), 325-345 (ALLLSYTVGSLLGPSFTAMLM), and 348-368 (FSDNLLFIMIASVSFIYLLML).

The protein belongs to the major facilitator superfamily. YcaD (TC 2.A.1.26) family.

It localises to the cell inner membrane. This is an uncharacterized protein from Escherichia coli O45:K1 (strain S88 / ExPEC).